The following is a 227-amino-acid chain: 2,3-bisphosphoglycerate-dependent phosphoglycerate mutase (227 aa).

Substrate is bound by residues 7–14, 20–21, R59, 86–89, K97, 113–114, and 182–183; these read RHGFSEWN, TG, ERHY, RR, and GN. The active-site Tele-phosphohistidine intermediate is H8. Catalysis depends on E86, which acts as the Proton donor/acceptor.

This sequence belongs to the phosphoglycerate mutase family. BPG-dependent PGAM subfamily. In terms of assembly, homodimer.

The enzyme catalyses (2R)-2-phosphoglycerate = (2R)-3-phosphoglycerate. The protein operates within carbohydrate degradation; glycolysis; pyruvate from D-glyceraldehyde 3-phosphate: step 3/5. In terms of biological role, catalyzes the interconversion of 2-phosphoglycerate and 3-phosphoglycerate. The polypeptide is 2,3-bisphosphoglycerate-dependent phosphoglycerate mutase (Actinobacillus pleuropneumoniae serotype 5b (strain L20)).